We begin with the raw amino-acid sequence, 153 residues long: Bifunctional protein GAL10 (153 aa).

The segment at 1-153 (MSDDIFLVTG…IPIPEHCPME (153 aa)) is galactowaldenase.

In the N-terminal section; belongs to the NAD(P)-dependent epimerase/dehydratase family. It in the C-terminal section; belongs to the aldose epimerase family. Requires NAD(+) as cofactor.

It catalyses the reaction UDP-alpha-D-glucose = UDP-alpha-D-galactose. The enzyme catalyses alpha-D-glucose = beta-D-glucose. The protein operates within carbohydrate metabolism; galactose metabolism. It participates in carbohydrate metabolism; hexose metabolism. Functionally, mutarotase converts alpha-aldose to the beta-anomer. It is active on D-glucose, L-arabinose, D-xylose, D-galactose, maltose and lactose. In Candida maltosa (Yeast), this protein is Bifunctional protein GAL10 (GAL10).